The sequence spans 387 residues: METLQDIGTNMLKDELRTPYFMIDEAKLIANLEIAKHLKEISGVKMVLALKCFSTWGVFDIIKPYLDGTTSSGPFEVKLGYETFGGETHAYSVGYSEEDVKEVIDICDKMIFNSQSQLAAYRHLVEGKASLGLRINPGVSYAGQDLANPARQFSRLGVQADHIDESVFDSINGVMFHMNCENKDVDAFIGLLDAISERFGRYLDKLDWVSLGGGVFFTWPGYDVEKLGAALKAFAERHAVQLYLEPGEAIITKTTDLVVTVVDIVENGMKTAIVDSATEAHRLDTLIYKEPASVLEASDKGQHEYVIGSCSCLAGDQFCVAKFDEPLQVGQKLHILDSAGYTMVKLNWFNGLKMPSVYCERKNGQIQKINQFGYEDFKRTLSLWSIE.

Lys51 carries the N6-(pyridoxal phosphate)lysine modification. Substrate is bound by residues Glu248 and Asp284.

Belongs to the Orn/Lys/Arg decarboxylase class-II family. NspC subfamily. Homodimer. Pyridoxal 5'-phosphate serves as cofactor.

It is found in the cytoplasm. The enzyme catalyses carboxynorspermidine + H(+) = norspermidine + CO2. The catalysed reaction is carboxyspermidine + H(+) = spermidine + CO2. Catalyzes the decarboxylation of carboxynorspermidine and carboxyspermidine. Essential for biofilm formation. The chain is Carboxynorspermidine/carboxyspermidine decarboxylase from Vibrio cholerae serotype O1 (strain ATCC 39315 / El Tor Inaba N16961).